We begin with the raw amino-acid sequence, 140 residues long: MAAITFHLDVVSAEKKIFSGRVETFQVTGSEGELGIFHGHTPLLTAIKPGMVRIVKLHGEEEFIYVSGGIVEVQPGTATVLADTAIRGEELDAAKAEEAKRRAKENILNQHGDMDFAQAASELAKAIAQLRVIELTKKRR.

Belongs to the ATPase epsilon chain family. As to quaternary structure, F-type ATPases have 2 components, CF(1) - the catalytic core - and CF(0) - the membrane proton channel. CF(1) has five subunits: alpha(3), beta(3), gamma(1), delta(1), epsilon(1). CF(0) has three main subunits: a, b and c.

Its subcellular location is the cell inner membrane. Its function is as follows. Produces ATP from ADP in the presence of a proton gradient across the membrane. The polypeptide is ATP synthase epsilon chain (Vibrio vulnificus (strain CMCP6)).